The chain runs to 506 residues: ATP synthase subunit alpha (506 aa).

170-177 (GDRQTGKT) is an ATP binding site.

The protein belongs to the ATPase alpha/beta chains family. As to quaternary structure, F-type ATPases have 2 components, CF(1) - the catalytic core - and CF(0) - the membrane proton channel. CF(1) has five subunits: alpha(3), beta(3), gamma(1), delta(1), epsilon(1). CF(0) has four main subunits: a(1), b(1), b'(1) and c(9-12).

The protein resides in the cellular thylakoid membrane. It carries out the reaction ATP + H2O + 4 H(+)(in) = ADP + phosphate + 5 H(+)(out). Functionally, produces ATP from ADP in the presence of a proton gradient across the membrane. The alpha chain is a regulatory subunit. The sequence is that of ATP synthase subunit alpha from Synechococcus sp. (strain CC9311).